The primary structure comprises 53 residues: MPQMAPISWLLLFIVFSITFILFCSINYYSYMPTSPKSNELKNINLNSMNWKW.

A helical transmembrane segment spans residues Met4–Cys24.

This sequence belongs to the ATPase protein 8 family. In terms of assembly, F-type ATPases have 2 components, CF(1) - the catalytic core - and CF(0) - the membrane proton channel.

It is found in the mitochondrion membrane. Its function is as follows. Mitochondrial membrane ATP synthase (F(1)F(0) ATP synthase or Complex V) produces ATP from ADP in the presence of a proton gradient across the membrane which is generated by electron transport complexes of the respiratory chain. F-type ATPases consist of two structural domains, F(1) - containing the extramembraneous catalytic core and F(0) - containing the membrane proton channel, linked together by a central stalk and a peripheral stalk. During catalysis, ATP synthesis in the catalytic domain of F(1) is coupled via a rotary mechanism of the central stalk subunits to proton translocation. Part of the complex F(0) domain. Minor subunit located with subunit a in the membrane. The protein is ATP synthase protein 8 (mt:ATPase8) of Drosophila yakuba (Fruit fly).